Consider the following 374-residue polypeptide: 4-galactosyl-N-acetylglucosaminide 3-alpha-L-fucosyltransferase FUT5 (374 aa).

At 1-15 (MDLLGAAKPQWPWRR) the chain is on the cytoplasmic side. The helical; Signal-anchor for type II membrane protein transmembrane segment at 16 to 34 (CLAGLLFQLLVAVCFFSYL) threads the bilayer. Residues 35–374 (RVSRDDATGS…TVRSIAAWFN (340 aa)) lie on the Lumenal side of the membrane. N60, N105, N167, and N198 each carry an N-linked (GlcNAc...) asparagine glycan.

Belongs to the glycosyltransferase 10 family.

Its subcellular location is the golgi apparatus. It localises to the golgi stack membrane. It catalyses the reaction a beta-D-galactosyl-(1-&gt;3)-N-acetyl-beta-D-glucosaminyl derivative + GDP-beta-L-fucose = a beta-D-galactosyl-(1-&gt;3)-[alpha-L-fucosyl-(1-&gt;4)]-N-acetyl-beta-D-glucosaminyl derivative + GDP + H(+). It carries out the reaction an N-acetyl-alpha-neuraminyl-(2-&gt;3)-beta-D-galactosyl-(1-&gt;4)-N-acetyl-beta-D-glucosaminyl derivative + GDP-beta-L-fucose = an alpha-Neu5Ac-(2-&gt;3)-beta-D-Gal-(1-&gt;4)-[alpha-L-Fuc-(1-&gt;3)]-beta-D-GlcNAc derivative + GDP + H(+). The catalysed reaction is an alpha-Neu5Ac-(2-&gt;3)-beta-D-Gal-(1-&gt;4)-beta-D-GlcNAc-(1-&gt;3)-beta-D-Gal-(1-&gt;4)-[alpha-L-Fuc-(1-&gt;3)]-beta-D-GlcNAc derivative + GDP-beta-L-fucose = an alpha-Neu5Ac-(2-&gt;3)-beta-D-Gal-(1-&gt;4)-[alpha-L-Fuc-(1-&gt;3)]-beta-D-GlcNAc-(1-&gt;3)-beta-D-Gal-(1-&gt;4)-[alpha-L-Fuc-(1-&gt;3)]-beta-D-GlcNAc derivative + GDP + H(+). The enzyme catalyses a beta-D-galactosyl-(1-&gt;4)-N-acetyl-beta-D-glucosaminyl derivative + GDP-beta-L-fucose = a beta-D-galactosyl-(1-&gt;4)-[alpha-L-fucosyl-(1-&gt;3)]-N-acetyl-beta-D-glucosaminyl derivative + GDP + H(+). It catalyses the reaction a neolactoside nLc4Cer + GDP-beta-L-fucose = a neolactoside III(3)-alpha-Fuc-nLc4Cer + GDP + H(+). It carries out the reaction a neolactoside nLc6Cer + GDP-beta-L-fucose = beta-D-galactosyl-(1-&gt;4)-N-acetyl-beta-D-glucosaminyl-(1-&gt;3)-beta-D-galactosyl-(1-&gt;4)-[alpha-L-fucosyl-(1-&gt;3)]-N-acetyl-beta-D-glucosaminyl-(1-&gt;3)-beta-D-galactosyl-(1-&gt;4)-beta-D-glucosyl-(1&lt;-&gt;1')-ceramide + GDP + H(+). The catalysed reaction is a neolactoside nLc6Cer(d18:1(4E)) + GDP-beta-L-fucose = a neolactoside III(3)-alpha-Fuc-nLc6Cer(d18:1(4E)) + GDP + H(+). The enzyme catalyses a neolactoside nLc4Cer(d18:1(4E)) + GDP-beta-L-fucose = a neolactoside III(3)-alpha-Fuc-nLc4Cer(d18:1(4E)) + GDP + H(+). It catalyses the reaction a neolactoside VI(3)-alpha-NeuNAc-nLc6Cer + GDP-beta-L-fucose = a neolactoside VI(3)-alpha-NeuAc,III(3)-alphaFuc-nLc6Cer + GDP + H(+). It carries out the reaction beta-D-galactosyl-(1-&gt;4)-N-acetyl-D-glucosamine + GDP-beta-L-fucose = beta-D-galactosyl-(1-&gt;4)-[alpha-L-fucosyl-(1-&gt;3)]-N-acetyl-D-glucosamine + GDP + H(+). The catalysed reaction is N-acetyl-alpha-neuraminosyl-(2-&gt;3)-beta-D-galactosyl-(1-&gt;4)-N-acetyl-beta-D-glucosamine + GDP-beta-L-fucose = N-acetyl-alpha-neuraminosyl-(2-&gt;3)-beta-D-galactosyl-(1-&gt;4)-[alpha-L-fucosyl-(1-&gt;3)]-N-acetyl-beta-D-glucosamine + GDP + H(+). The enzyme catalyses alpha-L-Fuc-(1-&gt;2)-beta-D-Gal-(1-&gt;4)-D-GlcNAc + GDP-beta-L-fucose = alpha-L-Fuc-(1-&gt;2)-beta-D-Gal-(1-&gt;4)-[alpha-L-Fuc-(1-&gt;3)]-D-GlcNAc + GDP + H(+). It catalyses the reaction an alpha-Neu5Ac-(2-&gt;3)-beta-D-Gal-(1-&gt;3)-D-GlcNAc derivative + GDP-beta-L-fucose = an alpha-Neu5Ac-(2-&gt;3)-beta-D-Gal-(1-&gt;3)-[alpha-L-Fuc-(1-&gt;4)]-beta-D-GlcNAc derivative + GDP + H(+). It functions in the pathway protein modification; protein glycosylation. Catalyzes preferentially the transfer of L-fucose, from a guanosine diphosphate-beta-L-fucose, to the N-acetyl-beta-D-glucosamine (GlcNAc) of an N-acetyllactosamine unit (type 2 chain) of an oligosaccharide, or a glycoprotein- and a glycolipid-linked N-acetyllactosamine unit via an alpha (1,3) linkage and participates in the surface expression of VIM-2, Lewis X/SSEA-1 and sialyl Lewis X antigens. Preferentially transfers fucose to the GlcNAc of an internal N-acetyllactosamine unit of a poly-N-acetyllactosamine chain acceptor substrate. Also catalyzes to a lesser extend the transfer of L-fucose to the GlcNAc of a type 1 (beta-D-galactosyl-(1-&gt;3)-N-acetyl-beta-D-glucosaminyl) or H-type 1 (alpha-L-Fuc-(1-&gt;2)-beta-D-Gal-(1-&gt;3)-D-GlcNAc) chain oligosaccharide via an alpha (1,4) linkage. Preferentially catalyzes sialylated type 2 oligosaccharide acceptors over neutral type 2 or H type 2 (alpha-L-Fuc-(1-&gt;2)-beta-D-Gal-(1-&gt;4)-D-GlcNAc) oligosaccharide acceptors. Lactose-based structures are also acceptor substrates. The polypeptide is 4-galactosyl-N-acetylglucosaminide 3-alpha-L-fucosyltransferase FUT5 (Hylobates lar (Lar gibbon)).